Reading from the N-terminus, the 69-residue chain is Cytochrome c oxidase subunit 8A, mitochondrial (69 aa).

A mitochondrion-targeting transit peptide spans methionine 1–glutamine 25. The short motif at serine 2–leucine 19 is the SIFI-degron element. Residues valine 26–glycine 36 lie on the Mitochondrial matrix side of the membrane. A helical transmembrane segment spans residues valine 37–serine 60. The Mitochondrial intermembrane portion of the chain corresponds to histidine 61–glutamate 69.

Belongs to the cytochrome c oxidase VIII family. In terms of assembly, component of the cytochrome c oxidase (complex IV, CIV), a multisubunit enzyme composed of 14 subunits. The complex is composed of a catalytic core of 3 subunits MT-CO1, MT-CO2 and MT-CO3, encoded in the mitochondrial DNA, and 11 supernumerary subunits COX4I, COX5A, COX5B, COX6A, COX6B, COX6C, COX7A, COX7B, COX7C, COX8 and NDUFA4, which are encoded in the nuclear genome. The complex exists as a monomer or a dimer and forms supercomplexes (SCs) in the inner mitochondrial membrane with NADH-ubiquinone oxidoreductase (complex I, CI) and ubiquinol-cytochrome c oxidoreductase (cytochrome b-c1 complex, complex III, CIII), resulting in different assemblies (supercomplex SCI(1)III(2)IV(1) and megacomplex MCI(2)III(2)IV(2)). In terms of processing, in response to mitochondrial stress, the precursor protein is ubiquitinated by the SIFI complex in the cytoplasm before mitochondrial import, leading to its degradation. Within the SIFI complex, UBR4 initiates ubiquitin chain that are further elongated or branched by KCMF1.

It is found in the mitochondrion inner membrane. Its pathway is energy metabolism; oxidative phosphorylation. Component of the cytochrome c oxidase, the last enzyme in the mitochondrial electron transport chain which drives oxidative phosphorylation. The respiratory chain contains 3 multisubunit complexes succinate dehydrogenase (complex II, CII), ubiquinol-cytochrome c oxidoreductase (cytochrome b-c1 complex, complex III, CIII) and cytochrome c oxidase (complex IV, CIV), that cooperate to transfer electrons derived from NADH and succinate to molecular oxygen, creating an electrochemical gradient over the inner membrane that drives transmembrane transport and the ATP synthase. Cytochrome c oxidase is the component of the respiratory chain that catalyzes the reduction of oxygen to water. Electrons originating from reduced cytochrome c in the intermembrane space (IMS) are transferred via the dinuclear copper A center (CU(A)) of subunit 2 and heme A of subunit 1 to the active site in subunit 1, a binuclear center (BNC) formed by heme A3 and copper B (CU(B)). The BNC reduces molecular oxygen to 2 water molecules using 4 electrons from cytochrome c in the IMS and 4 protons from the mitochondrial matrix. This is Cytochrome c oxidase subunit 8A, mitochondrial (Cox8a) from Mus musculus (Mouse).